Reading from the N-terminus, the 327-residue chain is Annexin A8 (327 aa).

4 Annexin repeats span residues 21–92 (FNPD…ALMY), 93–164 (PPYR…CLLQ), 177–249 (GLAL…TVVK), and 253–324 (NLHG…NLVG). Ca(2+) contacts are provided by M266, G268, G270, and D310.

It belongs to the annexin family.

Its function is as follows. This protein is an anticoagulant protein that acts as an indirect inhibitor of the thromboplastin-specific complex, which is involved in the blood coagulation cascade. This chain is Annexin A8 (ANXA8), found in Bos taurus (Bovine).